We begin with the raw amino-acid sequence, 245 residues long: Ribonuclease PH (245 aa).

Residues Arg86 and Gly124–Arg126 contribute to the phosphate site.

This sequence belongs to the RNase PH family. In terms of assembly, homohexameric ring arranged as a trimer of dimers. It has been suggested that the active form is the dimer which binds tRNA and that the hexameric form protects the substrate recognition loop (approximately residues 65-82) from proteolysis.

The enzyme catalyses tRNA(n+1) + phosphate = tRNA(n) + a ribonucleoside 5'-diphosphate. Functionally, phosphorolytic 3'-5' exoribonuclease that plays an important role in tRNA 3'-end maturation. Removes nucleotide residues following the 3'-CCA terminus of tRNAs; can also add nucleotides to the ends of RNA molecules by using nucleoside diphosphates as substrates, but this may not be physiologically important. Probably plays a role in initiation of 16S rRNA degradation (leading to ribosome degradation) during starvation. Plays a role in the secondary pathway of 23S rRNA 3' end maturation. This is Ribonuclease PH from Bacillus subtilis (strain 168).